Consider the following 261-residue polypeptide: Acetylglutamate kinase (261 aa).

Substrate contacts are provided by residues 46–47 (GG), arginine 68, and asparagine 160.

The protein belongs to the acetylglutamate kinase family. ArgB subfamily.

Its subcellular location is the cytoplasm. The enzyme catalyses N-acetyl-L-glutamate + ATP = N-acetyl-L-glutamyl 5-phosphate + ADP. The protein operates within amino-acid biosynthesis; L-arginine biosynthesis; N(2)-acetyl-L-ornithine from L-glutamate: step 2/4. Catalyzes the ATP-dependent phosphorylation of N-acetyl-L-glutamate. The sequence is that of Acetylglutamate kinase from Shewanella loihica (strain ATCC BAA-1088 / PV-4).